Consider the following 344-residue polypeptide: Dihydroorotase (344 aa).

2 residues coordinate Zn(2+): His13 and His15. Substrate contacts are provided by residues 15–17 (HLR) and Asn41. Positions 98, 135, and 173 each coordinate Zn(2+). Position 98 is an N6-carboxylysine (Lys98). His135 contacts substrate. Residue Leu218 participates in substrate binding. Residue Asp247 participates in Zn(2+) binding. Asp247 is an active-site residue. Substrate contacts are provided by His251 and Ala263.

Belongs to the metallo-dependent hydrolases superfamily. DHOase family. Class II DHOase subfamily. In terms of assembly, homodimer. Requires Zn(2+) as cofactor.

It catalyses the reaction (S)-dihydroorotate + H2O = N-carbamoyl-L-aspartate + H(+). It participates in pyrimidine metabolism; UMP biosynthesis via de novo pathway; (S)-dihydroorotate from bicarbonate: step 3/3. Functionally, catalyzes the reversible cyclization of carbamoyl aspartate to dihydroorotate. This Neisseria gonorrhoeae (strain ATCC 700825 / FA 1090) protein is Dihydroorotase.